We begin with the raw amino-acid sequence, 148 residues long: Transcriptional repressor NrdR (148 aa).

A zinc finger spans residues 3 to 32 (CPKCSSEESKVVDSRQAEDAIRRRRVCESC). The ATP-cone domain maps to 47–137 (LLVIKKDDKR…VYRSFKDVSE (91 aa)).

The protein belongs to the NrdR family. Zn(2+) serves as cofactor.

Negatively regulates transcription of bacterial ribonucleotide reductase nrd genes and operons by binding to NrdR-boxes. In Lactococcus lactis subsp. lactis (strain IL1403) (Streptococcus lactis), this protein is Transcriptional repressor NrdR.